A 436-amino-acid polypeptide reads, in one-letter code: Putative ankyrin repeat protein FPV026 (436 aa).

ANK repeat units lie at residues 63–92, 101–130, 135–164, 168–197, 201–230, and 234–266; these read EGIR…NVNE, TCYS…DVNN, LRNT…DQNI, NGNI…NLEI, NGRT…LVDS, and EGYT…FLNI. An F-box domain is found at 409 to 436; sequence TSTITNLPYEVIYIIVEKMTNKELCEIR.

This chain is Putative ankyrin repeat protein FPV026, found in Fowlpox virus (strain NVSL) (FPV).